The primary structure comprises 1158 residues: Transient receptor potential cation channel subfamily M member 5 (1158 aa).

Residues 1–729 are Cytoplasmic-facing; it reads MQTTQSSCPG…LTRWRKFWGA (729 aa). Phosphoserine; by PKC is present on Ser129. Positions 341, 350, 353, and 354 each coordinate Ca(2+). Residues 488 to 507 form a disordered region; that stretch reads GRRMEERGPPKRPAGQKWLP. Residues 552 to 572 are a coiled coil; it reads KIIKEMSHLEKEAEVARTMRE. The helical transmembrane segment at 730 to 754 threads the bilayer; that stretch reads PVTVFLGNVVMYFAFLFLFTYVLLV. The Extracellular portion of the chain corresponds to 755–764; that stretch reads DFRPPPQGPS. The helical transmembrane segment at 765–784 threads the bilayer; sequence GSEVTLYFWVFTLVLEEIRQ. Glu781 and Gln784 together coordinate Ca(2+). The Cytoplasmic portion of the chain corresponds to 785–805; sequence GFFTDEDTHLVKKFTLYVEDN. A helical membrane pass occupies residues 806-824; sequence WNKCDMVAIFLFIVGVTCR. Ca(2+) contacts are provided by Asn807 and Asp810. Residues 825–831 lie on the Extracellular side of the membrane; that stretch reads MVPSVFE. Residues 832 to 854 form a helical membrane-spanning segment; it reads AGRTVLAIDFMVFTLRLIHIFAI. At 855–863 the chain is on the cytoplasmic side; the sequence is HKQLGPKII. Residues 864-893 form a helical membrane-spanning segment; sequence IVERMMKDVFFFLFFLSVWLVAYGVTTQAL. The Extracellular segment spans residues 894–902; it reads LHPHDGRLE. Residues 903–938 constitute an intramembrane region (pore-forming); the sequence is WIFRRVLYRPYLQIFGQIPLDEIDEARVNCSLHPLL. The short motif at 917–919 is the Selectivity filter element; that stretch reads FGQ. Topologically, residues 939–950 are extracellular; it reads LESSASCPNLYA. The chain crosses the membrane as a helical span at residues 951–985; the sequence is NWLVILLLVTFLLVTNVLLMNLLIAMFSYTFQVVQ. Over 986–1158 the chain is Cytoplasmic; sequence GNADMFWKFQ…LESGLPPSDT (173 aa). A Ca(2+)-binding site is contributed by Glu1002. Over residues 1127–1141 the composition is skewed to polar residues; that stretch reads TYSSSQNCGCRSQPA. The disordered stretch occupies residues 1127–1158; that stretch reads TYSSSQNCGCRSQPASARDREYLESGLPPSDT.

This sequence belongs to the transient receptor (TC 1.A.4) family. LTrpC subfamily. TRPM5 sub-subfamily. Homotetramer. Post-translationally, multiple phosphorylation sites regulate the Gq/ TRPM5 modulation axis, with the Ser-129 playing a substantial role in this positive modulation. In terms of tissue distribution, strongly expressed in liver, heart, testis, brain and kidney. Detected in fetal liver, kidney, spleen, brain, heart and lung, and in adult skin, eyes, spleen, stomach, small intestine, colon, lung, bladder, pancreas and thymus. Biallelically expressed at all stages and tissues examined. Also expressed in subsets of taste receptor cells of the tongue, in olfactory sensory neurons of the main olfactory epithelium and in the vomeronasal organ.

It is found in the cell membrane. It carries out the reaction Na(+)(in) = Na(+)(out). The enzyme catalyses K(+)(in) = K(+)(out). Ca(2+)-activated cation channel. Displays voltage dependence modulation. Regulated by PI(4,5)P2 levels. PI(4,5)P 2 reverses the Ca(2+) -induced desensitization of channels. Inhibited by flufenamic acid with an IC(50) of 24.5 uM and spermine with an IC(50) of 37 uM. Is a highly temperature-sensitive, heat activated channel showing a steep increase of inward currents at temperatures between 15 and 35 degrees Celsius. Heat activation is due to a shift of the voltage-dependent activation curve to negative potentials. The channel is blocked by extracellular acidification. Monovalent cation-selective ion channel activated by intracellular Ca(2+) in a voltage- and temperature-dependent manner. Mediates the transport of Na(+), K(+) and Cs(+) ions equally well. Activated directly by increase in intracellular Ca(2+), but is impermeable to it. The activation mechanism of TRPM5 involves a multistep process. TRPM5 activation involves ligand binding (i.e., tastant molecule, glucose stimulation) to Gq/G-protein coupled receptors (GPCR) and leads to the breakdown of phosphatidylinositol bisphosphate (PIP2) into diacylglycerol (DAG) and inositol trisphosphate (IP3), IP3 binds to its receptors in the endoplasmic reticulum and cause Ca(2+) release. Simultaneously with the intracellular Ca(2+) release, DAG activates the protein kinase C (PKC), which phosphorylates the TRPM5 channel. This phosphorylation combined with the bound Ca(2+), leads to a robust inward current allowing the entry of sodium ions (Na+) into the cell. This ion influx depolarizes the cell membrane, generating action potentials that propagate TRPM5 signals. Is a key player in sensing sweet, umami and bitter stimuli. May also be involved in sensing semiochemicals. Involved in insulin secretion by pancreatic beta cells. The protein is Transient receptor potential cation channel subfamily M member 5 of Mus musculus (Mouse).